The primary structure comprises 293 residues: Lysosomal amino acid transporter 1 homolog (293 aa).

The Lumenal portion of the chain corresponds to 1 to 37 (MVWRTLVASNFSTCPNGSIQWIWDVFGECAQDGWDEA). Asparagine 10 is a glycosylation site (N-linked (GlcNAc...) asparagine). The 67-residue stretch at 34–100 (WDEASVALGL…LADQLPLQTY (67 aa)) folds into the PQ-loop 1 domain. The helical transmembrane segment at 38-58 (SVALGLVSIFCFAASTFPQYI) threads the bilayer. Topologically, residues 59 to 71 (KACKTGNMDQALS) are cytoplasmic. Residues 72 to 92 (LWFLLGWIGGDSCNLIGSFLA) traverse the membrane as a helical segment. The Lumenal portion of the chain corresponds to 93–96 (DQLP). The chain crosses the membrane as a helical span at residues 97–117 (LQTYTAVYYVLADLLMLTLYF). Topologically, residues 118–126 (HYKFKKQPS) are cytoplasmic. The helical transmembrane segment at 127-147 (LLSAPINSVLLFILGTVCITP) threads the bilayer. The Lumenal segment spans residues 148–182 (LLSSTDPVAVPREGFRGRTLLSVEPGNKPFTKKEV). A helical transmembrane segment spans residues 183-203 (VGFVIGSASSVLYLLSRLPQI). The region spanning 191–243 (SSVLYLLSRLPQIRTNFVRQSTQGISYSLFALVMLGNTLYGLSVLLKNPEVGQ) is the PQ-loop 2 domain. Residues 204 to 214 (RTNFVRQSTQG) are Cytoplasmic-facing. A helical transmembrane segment spans residues 215–235 (ISYSLFALVMLGNTLYGLSVL). Residues 236-254 (LKNPEVGQSEGSYLLHHLP) are Lumenal-facing. A helical transmembrane segment spans residues 255–275 (WLVGSLGVLLLDTIISIQFLV). At 276 to 293 (YRSHDADAASEREPLLPS) the chain is on the cytoplasmic side. The short motif at 290 to 291 (LL) is the Di-leucine motif element.

Belongs to the laat-1 family.

It is found in the lysosome membrane. Functionally, amino acid transporter that specifically mediates the pH-dependent export of the cationic amino acids arginine, histidine and lysine from lysosomes. This is Lysosomal amino acid transporter 1 homolog (Slc66a1) from Rattus norvegicus (Rat).